The chain runs to 207 residues: Large ribosomal subunit protein uL4 (207 aa).

A disordered region spans residues 45–78 (RQGTHAVKNRSAVSGGGRKPWRQKGTGRARQGSI).

The protein belongs to the universal ribosomal protein uL4 family. In terms of assembly, part of the 50S ribosomal subunit.

Its function is as follows. One of the primary rRNA binding proteins, this protein initially binds near the 5'-end of the 23S rRNA. It is important during the early stages of 50S assembly. It makes multiple contacts with different domains of the 23S rRNA in the assembled 50S subunit and ribosome. In terms of biological role, forms part of the polypeptide exit tunnel. The polypeptide is Large ribosomal subunit protein uL4 (Lacticaseibacillus paracasei (strain ATCC 334 / BCRC 17002 / CCUG 31169 / CIP 107868 / KCTC 3260 / NRRL B-441) (Lactobacillus paracasei)).